Consider the following 342-residue polypeptide: MEDNFASVVESLSGTSASALPLLTVSPADTSLKAPETKVQETKTEEKKPPKKRKSWGQELPIPKTNLPPRKRAKTEDEKEQRRIERVLRNRAAAQTSRERKRLEMEKLENEKIQMEQQNQFLLQRLSQMEAENNRLSQQLAQLTAEVRNSRNSTPKPGSPATASPTLTPTLFKQEGDELPLERIPFPTPSITDYSPTLKPSSLAESSDVTQHPAVSVGGLEGPGSALPLFDLGSGVEHDAANDIAAPLSDDDFHRLFNGDSSTEPDSSVIEDGFSFDILDSGDLSAFPFDSMVNFDSEPVALEGIEPAHGLPNETPYQTSGLQPSLGASTSRCDGQGIAAGC.

Residues 1-105 (MEDNFASVVE…TSRERKRLEM (105 aa)) are disordered. Basic and acidic residues-rich tracts occupy residues 35-48 (PETK…EEKK) and 74-88 (KTED…ERVL). The region spanning 80–143 (EQRRIERVLR…NRLSQQLAQL (64 aa)) is the bZIP domain. The segment at 82–135 (RRIERVLRNRAAAQTSRERKRLEMEKLENEKIQMEQQNQFLLQRLSQMEAENNR) is basic motif. The interval 136–143 (LSQQLAQL) is leucine-zipper. 2 disordered regions span residues 146–167 (EVRN…SPTL) and 306–330 (EPAH…GAST). Positions 315 to 330 (TPYQTSGLQPSLGAST) are enriched in polar residues.

It belongs to the bZIP family.

It is found in the nucleus. Master transcriptional regulator of the unfolded protein response (UPR) that recognizes and binds to the UPR element (UPRE) in the promoter of UPR-regulated genes. In the canonical UPR pathway, the ireA RNase splices the cytoplasmic mRNA hacA, which alters the reading frame to allow translation of the bZIP transcription factor hacA. Induces the expression of pmrA, scrA and spfA in response to UPR. The protein is Transcriptional regulator of the unfolded protein response hacA of Aspergillus fumigatus (strain ATCC MYA-4609 / CBS 101355 / FGSC A1100 / Af293) (Neosartorya fumigata).